A 106-amino-acid chain; its full sequence is Insulin-2 (106 aa).

The N-terminal stretch at 1–23 (MALWMQCLPLVLVLLFSTPNTEA) is a signal peptide. 3 disulfides stabilise this stretch: cysteine 30/cysteine 92, cysteine 42/cysteine 105, and cysteine 91/cysteine 96. The propeptide at 56–83 (DIEQAQVNGPQDNELDGMQFQPQEYQKM) is c peptide.

Belongs to the insulin family. In terms of assembly, heterodimer of a B chain and an A chain linked by two disulfide bonds.

The protein resides in the secreted. In terms of biological role, insulin decreases blood glucose concentration. It increases cell permeability to monosaccharides, amino acids and fatty acids. It accelerates glycolysis, the pentose phosphate cycle, and glycogen synthesis in liver. The polypeptide is Insulin-2 (ins-b) (Xenopus laevis (African clawed frog)).